A 378-amino-acid chain; its full sequence is MNKPLRNSHPLFKIANNALVDLPAPINISSWWNFGSLLGLCLIIQILTGLFLAMHYTADINLAFYSVNHICRDVNYGWLLRTLHANGASFFFICIYLHVGRGMYYGSYMFTPTWLIGVIILFLVMGTAFMGYVLPWGQMSFWGATVITNLLSAIPYLGMDLVQWLWGGFAVDNATLTRFFTFHFILPFIVLAMTMIHLLFLHQTGSNNPIGLNSNIDKIPFHPYFTFKDIVGFIVMIFILISLVLISPNLLGDPDNFIPANPLVTPAHIQPEWYFLFAYAILRSIPNKLGGVIALVLSIAILMILPFYNLSKFRGIQFYPINQVMFWSMLVTVILLTWIGARPVEEPYVLIGQILTVVYFLYYLVNPLITKWWDNLLN.

Transmembrane regions (helical) follow at residues 34 to 54, 78 to 99, 114 to 134, and 179 to 199; these read FGSL…FLAM, WLLR…YLHV, WLIG…GYVL, and FFTF…IHLL. Heme b-binding residues include H84 and H98. Residues H183 and H197 each contribute to the heme b site. H202 contributes to the a ubiquinone binding site. Transmembrane regions (helical) follow at residues 227–247, 289–309, 321–341, and 348–368; these read FKDI…VLIS, LGGV…PFYN, INQV…WIGA, and YVLI…VNPL.

It belongs to the cytochrome b family. In terms of assembly, the main subunits of complex b-c1 are: cytochrome b, cytochrome c1 and the Rieske protein. Requires heme b as cofactor.

It localises to the mitochondrion inner membrane. Its function is as follows. Component of the ubiquinol-cytochrome c reductase complex (complex III or cytochrome b-c1 complex) that is part of the mitochondrial respiratory chain. The b-c1 complex mediates electron transfer from ubiquinol to cytochrome c. Contributes to the generation of a proton gradient across the mitochondrial membrane that is then used for ATP synthesis. The chain is Cytochrome b (mt:Cyt-b) from Drosophila mauritiana (Fruit fly).